Here is a 286-residue protein sequence, read N- to C-terminus: Probable ketoamine kinase YniA (286 aa).

Residue 91-93 (DYL) participates in ATP binding. Residue Asp-193 is the Proton acceptor of the active site.

This sequence belongs to the fructosamine kinase family.

In terms of biological role, ketoamine kinase that phosphorylates ketoamines on the third carbon of the sugar moiety to generate ketoamine 3-phosphate. Its precise substrate are unknown: does not have ribulosamine and/or erythrulosamine 3-kinase activity in vitro. This chain is Probable ketoamine kinase YniA (yniA), found in Escherichia coli (strain K12).